A 98-amino-acid chain; its full sequence is NADH-ubiquinone oxidoreductase chain 4L (98 aa).

3 consecutive transmembrane segments (helical) span residues 1 to 21 (MSLIHINIFLAFTVSLMGLLM), 29 to 49 (SLLCLEGMMLSLFIMATMMVL), and 61 to 81 (IILLVFAACEAALGLSLLVMI).

It belongs to the complex I subunit 4L family. In terms of assembly, core subunit of respiratory chain NADH dehydrogenase (Complex I) which is composed of 45 different subunits.

The protein resides in the mitochondrion inner membrane. It carries out the reaction a ubiquinone + NADH + 5 H(+)(in) = a ubiquinol + NAD(+) + 4 H(+)(out). In terms of biological role, core subunit of the mitochondrial membrane respiratory chain NADH dehydrogenase (Complex I) which catalyzes electron transfer from NADH through the respiratory chain, using ubiquinone as an electron acceptor. Part of the enzyme membrane arm which is embedded in the lipid bilayer and involved in proton translocation. This chain is NADH-ubiquinone oxidoreductase chain 4L (MT-ND4L), found in Rhinoceros unicornis (Greater Indian rhinoceros).